Consider the following 458-residue polypeptide: MLKIIIPTIMLLPTALLSPKASLWTNTTTYSLLIATISLQWLNPTYFPHKNMTPWTGIDQISAPLLVLSCWLLPLMLLASQNHLQQEPLVRKRTFIVTLTTIQPFIILAFSATELTLFYISFEATLIPTLILITRWGNQPERLSAGIYLLFYTLISSLPLLVTILHLHTQIGTLHMPTLELTHPLLTHSWTGTLSGLALLMAFMVKAPLYGLHLWLPKAHVEAPIAGSMLLAALLLKLGGYGIMRVTLLMGPLTDRLSYPFLALALWGALMTSSICLRQTDLKSLIAYSSVSHMGLVIAASMIQTDWSFSGAMILMISHGLTSSMLFCLANTNYERTHSRILLLTRGLQPLLPLMSVWWLLANLTNMALPPTTNLMAELTIMIALFNWSTPTIILTGLATLLTASYTLFMLSMTQRGTLPTHLTSIHNSNTREHLLMTLHIFPMLLLMLKPELISGVI.

12 consecutive transmembrane segments (helical) span residues 21-43, 58-78, 93-112, 116-138, 145-165, 196-216, 224-244, 257-277, 285-305, 309-329, 341-361, and 379-399; these read ASLW…QWLN, IDQI…LMLL, RTFI…AFSA, TLFY…RWGN, AGIY…VTIL, GLAL…HLWL, PIAG…YGIM, LSYP…SICL, LIAY…MIQT, FSGA…LFCL, ILLL…WWLL, and LTIM…TGLA.

This sequence belongs to the complex I subunit 4 family.

It is found in the mitochondrion membrane. The enzyme catalyses a ubiquinone + NADH + 5 H(+)(in) = a ubiquinol + NAD(+) + 4 H(+)(out). Core subunit of the mitochondrial membrane respiratory chain NADH dehydrogenase (Complex I) that is believed to belong to the minimal assembly required for catalysis. Complex I functions in the transfer of electrons from NADH to the respiratory chain. The immediate electron acceptor for the enzyme is believed to be ubiquinone. This is NADH-ubiquinone oxidoreductase chain 4 (MT-ND4) from Struthio camelus (Common ostrich).